The following is a 1051-amino-acid chain: Integrin alpha-3 (1051 aa).

A signal peptide spans 1-32; it reads MGPGPRCAPGDPGWMLGALALMVAASGRFAFA. Over 33-991 the chain is Extracellular; that stretch reads FNLDTRFLVV…LVEELPAEIE (959 aa). 7 FG-GAP repeats span residues 38–103, 110–171, 185–235, 236–292, 293–354, 356–411, and 415–477; these read RFLV…KDDC, EKSD…DLQL, CNSN…WDLS, EYSY…GGDL, KRKQ…TSFP, QPSL…GLLR, and QIVH…VARP. Asparagine 86 carries N-linked (GlcNAc...) asparagine glycosylation. Disulfide bonds link cysteine 94-cysteine 103, cysteine 140-cysteine 162, and cysteine 185-cysteine 197. Positions 315, 317, 319, 323, 378, 380, 382, 386, 439, 441, 443, 445, and 447 each coordinate Ca(2+). Intrachain disulfides connect cysteine 485–cysteine 490 and cysteine 496–cysteine 550. 4 N-linked (GlcNAc...) asparagine glycosylation sites follow: asparagine 500, asparagine 511, asparagine 573, and asparagine 605. Cysteine 615 and cysteine 621 are oxidised to a cystine. 3 N-linked (GlcNAc...) asparagine glycosylation sites follow: asparagine 656, asparagine 697, and asparagine 841. Cysteine 694 and cysteine 702 form a disulfide bridge. Disulfide bonds link cysteine 846–cysteine 904 and cysteine 911–cysteine 916. The segment at 860-888 is disordered; sequence LSDPGDKPHSPQRRRRQLDPGGDQGSPPV. Asparagine 923, asparagine 926, asparagine 935, and asparagine 969 each carry an N-linked (GlcNAc...) asparagine glycan. The helical transmembrane segment at 992–1019 threads the bilayer; sequence LWLVLVAVSAGLLLLGLIIILLWKCGFF. Positions 1017–1021 match the GFFKR motif motif; that stretch reads GFFKR. Topologically, residues 1020–1051 are cytoplasmic; it reads KRARTRALYEAKRQKAEMKSQPSETERLTDDY.

It belongs to the integrin alpha chain family. In terms of assembly, heterodimer of an alpha and a beta subunit. The alpha subunit is composed of a heavy and a light chain linked by a disulfide bond. Alpha-3 associates with beta-1. Interacts with HPS5. Interacts with FAP (seprase); the interaction occurs at the cell surface of invadopodia membrane in a collagen-dependent manner. Post-translationally, isoform 1, but not isoform 2, is phosphorylated on serine residues.

The protein resides in the cell membrane. It localises to the cell projection. The protein localises to the invadopodium membrane. It is found in the filopodium membrane. Functionally, integrin alpha-3/beta-1 is a receptor for fibronectin, laminin, collagen, epiligrin, thrombospondin and CSPG4. Integrin alpha-3/beta-1 provides a docking site for FAP (seprase) at invadopodia plasma membranes in a collagen-dependent manner and hence may participate in the adhesion, formation of invadopodia and matrix degradation processes, promoting cell invasion. Alpha-3/beta-1 may mediate with LGALS3 the stimulation by CSPG4 of endothelial cells migration. The sequence is that of Integrin alpha-3 (ITGA3) from Cricetulus griseus (Chinese hamster).